The following is a 436-amino-acid chain: Chromosomal replication initiator protein DnaA (436 aa).

The segment at 1–80 (MSHEAVWQHV…QAPRFELRVV (80 aa)) is domain I, interacts with DnaA modulators. Residues 80 to 100 (VPGVVVQEDIFQAAPAEAPRP) are domain II. Positions 101 to 317 (KLNPKYTFEN…GALMRAIAFA (217 aa)) are domain III, AAA+ region. Gly-145, Gly-147, Lys-148, and Thr-149 together coordinate ATP. The domain IV, binds dsDNA stretch occupies residues 318–436 (SLNGVELTRA…LLRTLREACT (119 aa)).

Belongs to the DnaA family. Oligomerizes as a right-handed, spiral filament on DNA at oriC.

It localises to the cytoplasm. Functionally, plays an essential role in the initiation and regulation of chromosomal replication. ATP-DnaA binds to the origin of replication (oriC) to initiate formation of the DNA replication initiation complex once per cell cycle. Binds the DnaA box (a 9 base pair repeat at the origin) and separates the double-stranded (ds)DNA. Forms a right-handed helical filament on oriC DNA; dsDNA binds to the exterior of the filament while single-stranded (ss)DNA is stabiized in the filament's interior. The ATP-DnaA-oriC complex binds and stabilizes one strand of the AT-rich DNA unwinding element (DUE), permitting loading of DNA polymerase. After initiation quickly degrades to an ADP-DnaA complex that is not apt for DNA replication. Binds acidic phospholipids. This is Chromosomal replication initiator protein DnaA from Thermus thermophilus (strain ATCC BAA-163 / DSM 7039 / HB27).